A 355-amino-acid polypeptide reads, in one-letter code: Meiotic coiled-coil protein 4 (355 aa).

A coiled-coil region spans residues 298 to 338 (QRLSRTEINKEIIEIEKLELEVVQFQMSIANLINTQVEVTN).

The protein localises to the cytoplasm. Functionally, has a role in meiosis. This chain is Meiotic coiled-coil protein 4 (mcp4), found in Schizosaccharomyces pombe (strain 972 / ATCC 24843) (Fission yeast).